The sequence spans 621 residues: MAENADDDLNSNLLHAPYLTGDPQLDTAIGQWLRWDKNPKTKEQIENLLRNGMNKELRDRLCCRMTFGTAGLRSAMGAGFCYINDLTVIQSTQGMYKYLERCFSDFKQRGFVVGYDTRGQVTSSCSSQRLAKLTAAVLLAKDIPVYLFSRYVPTPFVPYAVQELKAVAGVMITASHNRKEDNGYKVYWETGAQITSPHDKEILKCIEECVEPWNDSWNDNLVDTSPLKKDPLQDICKKYMEDLKKICFYRDLNSKTTLKFVHTSFHGVGHDYVQLAFQVFGFKPPIPVPEQKDPDPDFSTVKCPNPEEGESVLELSLRLAEKENARIVLATDPDADRLAVAELQENGRWKVFTGNELAALFGWWMFDCWKKNKPNADVKNVYMLATTVSSKILKAIALKEGFHFEETLPGFKWIGSRIKDLLGNGKEVLFAFEESIGFLCGTSVLDKDGVSAAAVVAEMASFLDTRKVTLMEQLTKVYEIYGYHMSKTSYFLCYDPPTIKTIFERIRNFESPKEYPKFCGAFAILHVRDITTGYDSSQPNKKSVLPVSKNSQMITFTFQNGCVATLRTSGTEPKIKYYAEMCASPGQSDTTFLEEELKKLIDALIENFLEPSKNALVWRSV.

Arg73 and Ser175 together coordinate alpha-D-glucose 1,6-bisphosphate. Ser175 (phosphoserine intermediate) is an active-site residue. Mg(2+) is bound by residues Ser175, Asp332, Asp334, and Asp336. Ser175 is modified (phosphoserine). Alpha-D-glucose 1,6-bisphosphate-binding residues include Asp336, Arg337, Glu433, Ser435, and Lys447.

Belongs to the phosphohexose mutase family. As to expression, expressed at highest levels in the brain and testis, at intermediate levels in thymus, spleen, lung and skeletal muscle, and at lowest levels in kidney, liver and heart.

It localises to the cytoplasm. The protein localises to the cytosol. It catalyses the reaction (2R)-3-phospho-glyceroyl phosphate + alpha-D-glucose 1-phosphate = alpha-D-glucose 1,6-bisphosphate + (2R)-3-phosphoglycerate + H(+). The enzyme catalyses alpha-D-glucose 6-phosphate + (2R)-3-phospho-glyceroyl phosphate = alpha-D-glucose 1,6-bisphosphate + (2R)-3-phosphoglycerate + H(+). It carries out the reaction (2R)-3-phospho-glyceroyl phosphate + alpha-D-ribose 1-phosphate = alpha-D-ribose 1,5-bisphosphate + (2R)-3-phosphoglycerate + H(+). The catalysed reaction is 2-deoxy-alpha-D-ribose 1-phosphate + (2R)-3-phospho-glyceroyl phosphate = 2-deoxy-alpha-D-ribose 1,5-bisphosphate + (2R)-3-phosphoglycerate + H(+). It catalyses the reaction (2R)-3-phospho-glyceroyl phosphate + alpha-D-mannose 1-phosphate = alpha-D-mannose 1,6-bisphosphate + (2R)-3-phosphoglycerate + H(+). In terms of biological role, glucose 1,6-bisphosphate synthase using 1,3-bisphosphoglycerate as a phosphate donor and a series of 1-phosphate sugars, including glucose 1-phosphate, mannose 1-phosphate, ribose 1-phosphate and deoxyribose 1-phosphate, as acceptors. In vitro, also exhibits very low phosphopentomutase and phosphoglucomutase activity which are most probably not physiologically relevant. The chain is Glucose 1,6-bisphosphate synthase from Mus musculus (Mouse).